A 356-amino-acid chain; its full sequence is 3-dehydroquinate synthase (356 aa).

NAD(+)-binding positions include 106–110 (GVVGD), 130–131 (TT), K143, and K152. Zn(2+)-binding residues include E185, H248, and H265.

This sequence belongs to the sugar phosphate cyclases superfamily. Dehydroquinate synthase family. The cofactor is Co(2+). It depends on Zn(2+) as a cofactor. NAD(+) serves as cofactor.

It localises to the cytoplasm. The catalysed reaction is 7-phospho-2-dehydro-3-deoxy-D-arabino-heptonate = 3-dehydroquinate + phosphate. It participates in metabolic intermediate biosynthesis; chorismate biosynthesis; chorismate from D-erythrose 4-phosphate and phosphoenolpyruvate: step 2/7. Its function is as follows. Catalyzes the conversion of 3-deoxy-D-arabino-heptulosonate 7-phosphate (DAHP) to dehydroquinate (DHQ). The sequence is that of 3-dehydroquinate synthase from Thermoanaerobacter sp. (strain X514).